Consider the following 119-residue polypeptide: Large ribosomal subunit protein bL20 (119 aa).

This sequence belongs to the bacterial ribosomal protein bL20 family.

Binds directly to 23S ribosomal RNA and is necessary for the in vitro assembly process of the 50S ribosomal subunit. It is not involved in the protein synthesizing functions of that subunit. This Verminephrobacter eiseniae (strain EF01-2) protein is Large ribosomal subunit protein bL20.